Here is an 85-residue protein sequence, read N- to C-terminus: UPF0512 protein R (85 aa).

Belongs to the UPF0512 family.

This is UPF0512 protein R from Dictyostelium discoideum (Social amoeba).